Reading from the N-terminus, the 571-residue chain is Adenine deaminase (571 aa).

It belongs to the metallo-dependent hydrolases superfamily. Adenine deaminase family. Requires Mn(2+) as cofactor.

It carries out the reaction adenine + H2O + H(+) = hypoxanthine + NH4(+). The polypeptide is Adenine deaminase (Dehalococcoides mccartyi (strain ATCC BAA-2100 / JCM 16839 / KCTC 5957 / BAV1)).